The sequence spans 472 residues: Aspartyl/glutamyl-tRNA(Asn/Gln) amidotransferase subunit B (472 aa).

This sequence belongs to the GatB/GatE family. GatB subfamily. Heterotrimer of A, B and C subunits.

It catalyses the reaction L-glutamyl-tRNA(Gln) + L-glutamine + ATP + H2O = L-glutaminyl-tRNA(Gln) + L-glutamate + ADP + phosphate + H(+). The enzyme catalyses L-aspartyl-tRNA(Asn) + L-glutamine + ATP + H2O = L-asparaginyl-tRNA(Asn) + L-glutamate + ADP + phosphate + 2 H(+). Functionally, allows the formation of correctly charged Asn-tRNA(Asn) or Gln-tRNA(Gln) through the transamidation of misacylated Asp-tRNA(Asn) or Glu-tRNA(Gln) in organisms which lack either or both of asparaginyl-tRNA or glutaminyl-tRNA synthetases. The reaction takes place in the presence of glutamine and ATP through an activated phospho-Asp-tRNA(Asn) or phospho-Glu-tRNA(Gln). This chain is Aspartyl/glutamyl-tRNA(Asn/Gln) amidotransferase subunit B, found in Mycoplasmopsis agalactiae (strain NCTC 10123 / CIP 59.7 / PG2) (Mycoplasma agalactiae).